We begin with the raw amino-acid sequence, 88 residues long: UPF0335 protein WD_0557 (88 aa).

Belongs to the UPF0335 family.

The protein is UPF0335 protein WD_0557 of Wolbachia pipientis wMel.